A 578-amino-acid chain; its full sequence is A-type ATP synthase subunit A (578 aa).

ATP is bound at residue 228–235 (GPFGSGKT).

Belongs to the ATPase alpha/beta chains family. Has multiple subunits with at least A(3), B(3), C, D, E, F, H, I and proteolipid K(x).

It localises to the cell membrane. It carries out the reaction ATP + H2O + 4 H(+)(in) = ADP + phosphate + 5 H(+)(out). In terms of biological role, component of the A-type ATP synthase that produces ATP from ADP in the presence of a proton gradient across the membrane. The A chain is the catalytic subunit. This Methanosarcina acetivorans (strain ATCC 35395 / DSM 2834 / JCM 12185 / C2A) protein is A-type ATP synthase subunit A.